The primary structure comprises 273 residues: MFRRVRPYSTFIDKCPPPAYDTGCTYCKVPAFPPDKRLDATTHLNGTAPSMWKHVLAFSHGVATFDTMPPKINLVPGSLASEFEVLRRKMLSPQHPVTLSNAIVSGIDGGTHQKVFIYPDCIQVEFKLANLPEFIQHYLLPVQETESVFNPFASANATPHTKVERPHLFQETPIHKDLVLICGHTQRDIRCGRIAPLLLQEFERVLAHEKLDVDVGLVSHIGGHAYAGNVIYFSKHQPPVWYGRVFPEQVQGIVRETIVEGRIIKELYRGQTM.

It belongs to the AIM32 family.

This is Altered inheritance of mitochondria protein 32 (AIM32) from Clavispora lusitaniae (strain ATCC 42720) (Yeast).